We begin with the raw amino-acid sequence, 876 residues long: Leucine--tRNA ligase (876 aa).

The short motif at 42–52 (PYPSGKLHMGH) is the 'HIGH' region element. The short motif at 634-638 (KMSKS) is the 'KMSKS' region element. ATP is bound at residue Lys-637.

This sequence belongs to the class-I aminoacyl-tRNA synthetase family.

The protein resides in the cytoplasm. The enzyme catalyses tRNA(Leu) + L-leucine + ATP = L-leucyl-tRNA(Leu) + AMP + diphosphate. The polypeptide is Leucine--tRNA ligase (Neisseria meningitidis serogroup C (strain 053442)).